Reading from the N-terminus, the 157-residue chain is Peptide methionine sulfoxide reductase MsrA (157 aa).

The active site involves Cys10.

Belongs to the MsrA Met sulfoxide reductase family.

It catalyses the reaction L-methionyl-[protein] + [thioredoxin]-disulfide + H2O = L-methionyl-(S)-S-oxide-[protein] + [thioredoxin]-dithiol. The enzyme catalyses [thioredoxin]-disulfide + L-methionine + H2O = L-methionine (S)-S-oxide + [thioredoxin]-dithiol. Its function is as follows. Has an important function as a repair enzyme for proteins that have been inactivated by oxidation. Catalyzes the reversible oxidation-reduction of methionine sulfoxide in proteins to methionine. This Clostridium perfringens (strain SM101 / Type A) protein is Peptide methionine sulfoxide reductase MsrA.